Reading from the N-terminus, the 425-residue chain is CinA-like protein (425 aa).

The protein belongs to the CinA family.

This chain is CinA-like protein, found in Trichodesmium erythraeum (strain IMS101).